Reading from the N-terminus, the 341-residue chain is Anthranilate phosphoribosyltransferase (341 aa).

5-phospho-alpha-D-ribose 1-diphosphate contacts are provided by residues G79, 82-83 (GD), T87, 89-92 (NIST), 107-115 (KHGNRAVSS), and S119. G79 provides a ligand contact to anthranilate. Residue S91 participates in Mg(2+) binding. N110 is a binding site for anthranilate. An anthranilate-binding site is contributed by R165. D224 and E225 together coordinate Mg(2+).

It belongs to the anthranilate phosphoribosyltransferase family. In terms of assembly, homodimer. Mg(2+) serves as cofactor.

The enzyme catalyses N-(5-phospho-beta-D-ribosyl)anthranilate + diphosphate = 5-phospho-alpha-D-ribose 1-diphosphate + anthranilate. It functions in the pathway amino-acid biosynthesis; L-tryptophan biosynthesis; L-tryptophan from chorismate: step 2/5. Catalyzes the transfer of the phosphoribosyl group of 5-phosphorylribose-1-pyrophosphate (PRPP) to anthranilate to yield N-(5'-phosphoribosyl)-anthranilate (PRA). The chain is Anthranilate phosphoribosyltransferase from Bacillus cereus (strain B4264).